The chain runs to 48 residues: Sperm protamine R3 isoform 1 (48 aa).

Over residues 1–29 (ARRRHSMKKKRKSVRRRKTRKNQRKRKNS) the composition is skewed to basic residues. The interval 1–48 (ARRRHSMKKKRKSVRRRKTRKNQRKRKNSLGRSFKQHGFLKQPPRFRP) is disordered.

Testis.

It localises to the nucleus. The protein resides in the chromosome. In terms of biological role, protamines substitute for histones in the chromatin of sperm during the haploid phase of spermatogenesis. They compact sperm DNA into a highly condensed, stable and inactive complex. The polypeptide is Sperm protamine R3 isoform 1 (Hydrolagus colliei (Spotted ratfish)).